Here is a 304-residue protein sequence, read N- to C-terminus: Probable casein kinase I homolog ECU03_0910 (304 aa).

In terms of domain architecture, Protein kinase spans 8–304 (IKLVQKIASG…SDSMGDLEIL (297 aa)). ATP contacts are provided by residues 14 to 22 (IASGAFGDI) and Lys37. The Proton acceptor role is filled by Asp129.

The protein belongs to the protein kinase superfamily. CK1 Ser/Thr protein kinase family. Casein kinase I subfamily.

The protein resides in the nucleus. The enzyme catalyses L-seryl-[protein] + ATP = O-phospho-L-seryl-[protein] + ADP + H(+). The catalysed reaction is L-threonyl-[protein] + ATP = O-phospho-L-threonyl-[protein] + ADP + H(+). Involved in DNA repair. May regulate the activity of protein(s) involved in double strand break repair caused by gamma rays. This is Probable casein kinase I homolog ECU03_0910 from Encephalitozoon cuniculi (strain GB-M1) (Microsporidian parasite).